The chain runs to 332 residues: MSHKILELYSGIGGMHCAWKESGLDGEIVAAVDINTVANSVYKHNFPETNLLNRNIQQLTPQVIKKWNVDTILMSPPCQPFTRNGKYLDDNDPRTNSFLYIIGILDQLDNVDYILMENVKGFENSTVRNLFIDKLKECNFIYQEFLLCPSTVGVPNSRLRYYCTARRNNLTWPFKRGDEIITRLPKDFGVPHSLESIIEEDVDEKFLVPDKILRCAKVFDICYKTSKRSCCFTKAYTHYADGTGSIFTDKPREVVQKCYEEANQNEIGSEKFVELFKELKLRYFTPKEVLMIMCFPKSYNLPTNISMKQCYRLLGNSVNVKVISELLKILFE.

Residues His-3–Glu-332 enclose the SAM-dependent MTase C5-type domain. S-adenosyl-L-homocysteine-binding positions include Ile-12–Gly-14, Asp-33–Ile-34, Asn-55–Ile-56, and Ser-75. Cys-78 is a catalytic residue. S-adenosyl-L-homocysteine contacts are provided by residues Gln-79, Ser-97, and Asn-316 to Ser-317.

It belongs to the class I-like SAM-binding methyltransferase superfamily. C5-methyltransferase family.

It is found in the cytoplasm. Its subcellular location is the nucleus. The catalysed reaction is cytidine(38) in tRNA + S-adenosyl-L-methionine = 5-methylcytidine(38) in tRNA + S-adenosyl-L-homocysteine + H(+). It catalyses the reaction a 2'-deoxycytidine in DNA + S-adenosyl-L-methionine = a 5-methyl-2'-deoxycytidine in DNA + S-adenosyl-L-homocysteine + H(+). Its function is as follows. Specifically methylates cytosine 38 in the anticodon loop of tRNA(Asp). Also has DNA (cytosine-5)-methyltransferase activity. Shows affinity for both tRNA(Asp) and DNA substrates. The protein is tRNA (cytosine(38)-C(5))-methyltransferase of Spodoptera frugiperda (Fall armyworm).